A 253-amino-acid chain; its full sequence is Major prion protein (253 aa).

The first 22 residues, 1 to 22 (MANLGCWMLVLFVATWSNLGLC), serve as a signal peptide directing secretion. An interaction with ADGRG6 region spans residues 23–38 (KKRPKPGGWNTGGSRY). Residues 23–230 (KKRPKPGGWN…ESQAYYQRGS (208 aa)) are interaction with GRB2, ERI3 and SYN1. A disordered region spans residues 25-108 (RPKPGGWNTG…WNKPSKPKTN (84 aa)). Tandem repeats lie at residues 51 to 59 (PQGGGGWGQ), 60 to 67 (PHGGGWGQ), 68 to 75 (PHGGGWGQ), 76 to 83 (PHGGGWGQ), and 84 to 91 (PHGGGWGQ). The 5 X 8 AA tandem repeats of P-H-G-G-G-W-G-Q stretch occupies residues 51–91 (PQGGGGWGQPHGGGWGQPHGGGWGQPHGGGWGQPHGGGWGQ). Over residues 52 to 95 (QGGGGWGQPHGGGWGQPHGGGWGQPHGGGWGQPHGGGWGQGGGT) the composition is skewed to gly residues. Residues histidine 61, glycine 62, glycine 63, histidine 69, glycine 70, glycine 71, histidine 77, glycine 78, glycine 79, histidine 85, glycine 86, and glycine 87 each coordinate Cu(2+). A disulfide bridge connects residues cysteine 179 and cysteine 214. 2 N-linked (GlcNAc...) asparagine glycosylation sites follow: asparagine 181 and asparagine 197. A lipid anchor (GPI-anchor amidated serine) is attached at serine 230. The propeptide at 231–253 (SMVLFSSPPVILLISFLIFLIVG) is removed in mature form.

It belongs to the prion family. As to quaternary structure, monomer and homodimer. Has a tendency to aggregate into amyloid fibrils containing a cross-beta spine, formed by a steric zipper of superposed beta-strands. Soluble oligomers may represent an intermediate stage on the path to fibril formation. Copper binding may promote oligomerization. Interacts with GRB2, APP, ERI3/PRNPIP and SYN1. Mislocalized cytosolically exposed PrP interacts with MGRN1; this interaction alters MGRN1 subcellular location and causes lysosomal enlargement. Interacts with APP. Interacts with KIAA1191. Interacts with ADGRG6.

It localises to the cell membrane. Its subcellular location is the golgi apparatus. Its function is as follows. Its primary physiological function is unclear. May play a role in neuronal development and synaptic plasticity. May be required for neuronal myelin sheath maintenance. May promote myelin homeostasis through acting as an agonist for ADGRG6 receptor. May play a role in iron uptake and iron homeostasis. Soluble oligomers are toxic to cultured neuroblastoma cells and induce apoptosis (in vitro). Association with GPC1 (via its heparan sulfate chains) targets PRNP to lipid rafts. Also provides Cu(2+) or Zn(2+) for the ascorbate-mediated GPC1 deaminase degradation of its heparan sulfate side chains. The sequence is that of Major prion protein (PRNP) from Pongo pygmaeus (Bornean orangutan).